The sequence spans 829 residues: Ectonucleotide pyrophosphatase/phosphodiesterase C27A7.1 (829 aa).

A helical; Signal-anchor for type II membrane protein membrane pass occupies residues 54–74 (VIGIAVLLLAMVVIVVIVLLL). Thr224 functions as the Nucleophile in the catalytic mechanism. N-linked (GlcNAc...) asparagine glycans are attached at residues Asn296, Asn424, Asn514, Asn542, Asn582, Asn649, Asn733, and Asn748. Cys439 and Cys782 are oxidised to a cystine.

The protein belongs to the nucleotide pyrophosphatase/phosphodiesterase family.

Its subcellular location is the membrane. Probable phosphodiesterase. The polypeptide is Ectonucleotide pyrophosphatase/phosphodiesterase C27A7.1 (Caenorhabditis elegans).